A 370-amino-acid chain; its full sequence is tRNA-specific 2-thiouridylase MnmA (370 aa).

ATP contacts are provided by residues 11-18 (GMSGGVDS) and methionine 37. The interaction with target base in tRNA stretch occupies residues 97-99 (NPD). Cysteine 102 (nucleophile) is an active-site residue. An intrachain disulfide couples cysteine 102 to cysteine 199. Position 126 (glycine 126) interacts with ATP. Positions 149–151 (KDQ) are interaction with tRNA. Cysteine 199 acts as the Cysteine persulfide intermediate in catalysis. Residues 307-308 (RY) are interaction with tRNA.

This sequence belongs to the MnmA/TRMU family.

The protein resides in the cytoplasm. It carries out the reaction S-sulfanyl-L-cysteinyl-[protein] + uridine(34) in tRNA + AH2 + ATP = 2-thiouridine(34) in tRNA + L-cysteinyl-[protein] + A + AMP + diphosphate + H(+). Catalyzes the 2-thiolation of uridine at the wobble position (U34) of tRNA, leading to the formation of s(2)U34. The protein is tRNA-specific 2-thiouridylase MnmA of Staphylococcus haemolyticus (strain JCSC1435).